The sequence spans 37 residues: Large ribosomal subunit protein bL36 (37 aa).

It belongs to the bacterial ribosomal protein bL36 family.

This is Large ribosomal subunit protein bL36 from Sulfurovum sp. (strain NBC37-1).